Consider the following 58-residue polypeptide: Ribosome biogenesis protein Nop10 (58 aa).

The protein belongs to the NOP10 family.

Functionally, involved in ribosome biogenesis; more specifically in 18S rRNA pseudouridylation and in cleavage of pre-rRNA. This Methanobrevibacter smithii (strain ATCC 35061 / DSM 861 / OCM 144 / PS) protein is Ribosome biogenesis protein Nop10.